The primary structure comprises 1487 residues: Golgin subfamily A member 3 (1487 aa).

M1 is modified (N-acetylmethionine). A disordered region spans residues 1–118 (MDGASAKQDG…GTSAEGSVRK (118 aa)). S18 and S60 each carry phosphoserine. Over residues 62–74 (DRSSQVAICQNGQ) the composition is skewed to polar residues. The interaction with GOPC stretch occupies residues 121–141 (LQSLRLSLPMQETQLCSTASS). The segment at 172-257 (ERSSQPATKM…DYRTEDPSDS (86 aa)) is golgi-targeting domain. Disordered stretches follow at residues 221-321 (PKVG…SSLS) and 365-394 (AAQH…SMES). Composition is skewed to low complexity over residues 269 to 288 (SSLK…SPSS), 312 to 321 (SDSSSHSSLS), and 365 to 375 (AAQHQDQNQEA). The residue at position 270 (S270) is a Phosphoserine. The stretch at 358-1454 (KDVLQAAAAQ…TITVHESLSS (1097 aa)) forms a coiled coil. Phosphoserine is present on residues S381, S385, and S461. A compositionally biased stretch (basic and acidic residues) spans 785-796 (KEELDRGARRLE). Residues 785 to 804 (KEELDRGARRLEEDTEETSG) form a disordered region. S979 bears the Phosphoserine mark. Basic and acidic residues predominate over residues 1372–1382 (RGAAKKKEPKG). 2 disordered regions span residues 1372 to 1396 (RGAA…IKIP) and 1458 to 1487 (VEAA…GLGQ). S1387 carries the post-translational modification Phosphoserine. Over residues 1462 to 1474 (PAEHAHPRGDTKL) the composition is skewed to basic and acidic residues. Position 1479 is a phosphoserine (S1479).

As to quaternary structure, homodimer. Interacts with GOLGA7. Interacts with GOPC. Cleaved by caspases in apoptotic cells. In terms of tissue distribution, highly expressed in testis. Transcripts can be found in spermatids during spermatogenesis. No expression in Leydig cells, spermatogonia or spermatocytes. Detected at low levels in all tissues.

It is found in the cytoplasm. The protein resides in the golgi apparatus. It localises to the golgi stack membrane. Plays an important role in spermatogenesis and/or testis development. Probably identical with the serologically detectable male antigen (SDM). Probably involved in maintaining Golgi structure. This chain is Golgin subfamily A member 3 (Golga3), found in Mus musculus (Mouse).